The sequence spans 273 residues: 2,3,4,5-tetrahydropyridine-2,6-dicarboxylate N-succinyltransferase (273 aa).

Substrate is bound by residues R104 and D141.

Belongs to the transferase hexapeptide repeat family. Homotrimer.

It is found in the cytoplasm. It catalyses the reaction (S)-2,3,4,5-tetrahydrodipicolinate + succinyl-CoA + H2O = (S)-2-succinylamino-6-oxoheptanedioate + CoA. It functions in the pathway amino-acid biosynthesis; L-lysine biosynthesis via DAP pathway; LL-2,6-diaminopimelate from (S)-tetrahydrodipicolinate (succinylase route): step 1/3. The polypeptide is 2,3,4,5-tetrahydropyridine-2,6-dicarboxylate N-succinyltransferase (Buchnera aphidicola subsp. Schizaphis graminum (strain Sg)).